The chain runs to 163 residues: Nucleotide-binding protein Pnap_1080 (163 aa).

It belongs to the YajQ family.

In terms of biological role, nucleotide-binding protein. The sequence is that of Nucleotide-binding protein Pnap_1080 from Polaromonas naphthalenivorans (strain CJ2).